The following is an 842-amino-acid chain: Pentatricopeptide repeat-containing protein At3g22690 (842 aa).

PPR repeat units lie at residues Thr98 to Pro132, Asp133 to Lys167, Asp168 to Ser202, Trp203 to Pro234, Asn235 to Val269, Asn270 to Ser300, Asn301 to Pro335, Asp336 to Ser370, Trp371 to Lys401, Thr402 to Ser436, Trp437 to Gln463, Asp469 to Leu503, Asp504 to Arg534, Asp535 to Pro569, Asp570 to Pro605, and Glu606 to Glu636. The type E motif stretch occupies residues Ile641–Arg716. The tract at residues Gly717–Ser747 is type E(+) motif. Positions His748 to Trp842 are type DYW motif.

This sequence belongs to the PPR family. PCMP-H subfamily.

This is Pentatricopeptide repeat-containing protein At3g22690 (PCMP-H56) from Arabidopsis thaliana (Mouse-ear cress).